Reading from the N-terminus, the 1103-residue chain is Trophozoite exported protein 1 (1103 aa).

Residues 173 to 212 (KKEKIEDKKYEQDDEEENEEEEEEEEEEEGEEENKEDEEF) adopt a coiled-coil conformation. 2 disordered regions span residues 178-210 (EDKK…KEDE) and 271-301 (KSYS…DNGK). Residues 184–210 (QDDEEENEEEEEEEEEEEGEEENKEDE) show a composition bias toward acidic residues. Positions 271 to 280 (KSYSGDEKIN) are enriched in basic and acidic residues. Coiled-coil stretches lie at residues 304–330 (DYVK…LECN) and 478–518 (YKNY…KLNN). The disordered stretch occupies residues 544–601 (YFDEGENPYNRNNKNYRTDNKNSDDNNNNNNYYYNNYNSDDNYNSEDNEYNNGNYRFR). Residues 568-585 (DNNNNNNYYYNNYNSDDN) are compositionally biased toward low complexity. Coiled-coil stretches lie at residues 650 to 791 (FRNL…LSGI), 819 to 932 (DEKY…IYKK), and 993 to 1030 (NKKL…NLSK). The RING-type zinc-finger motif lies at 1050–1089 (CSVCMENFRNYIIIKCGHIYCNNCIFNNLKTRNRKCPQCK).

The protein resides in the host cell membrane. The sequence is that of Trophozoite exported protein 1 from Plasmodium falciparum (isolate 3D7).